The sequence spans 330 residues: Malate dehydrogenase (330 aa).

12–18 (GAAGQIG) is an NAD(+) binding site. Substrate is bound by residues Arg93 and Arg99. NAD(+) is bound by residues Asn106, Gln113, and 130 to 132 (VGN). 2 residues coordinate substrate: Asn132 and Arg166. His191 functions as the Proton acceptor in the catalytic mechanism.

Belongs to the LDH/MDH superfamily. MDH type 2 family.

It carries out the reaction (S)-malate + NAD(+) = oxaloacetate + NADH + H(+). Its function is as follows. Catalyzes the reversible oxidation of malate to oxaloacetate. The sequence is that of Malate dehydrogenase from Azoarcus sp. (strain BH72).